Reading from the N-terminus, the 334-residue chain is MEIGKKIINIIKLLFDDWQNKAISILIAILMFVAFNFNKIESITTEKEFKIILNDQIALGKIPDFSKIKITIKVNKDDLKYLDLNKIILFIEASSIKIPGSYKLPIKIKNLNSIHIAEYKLSKTNVLLNLDNKVSKLVKIEPKFKLIEKDGKGEYFIAKYNILPENLLVYGPEQELKKINTIQTNVKEFDTRTLFVSDYLEVVPPNPLVMFEKSHVVVNIYLNKKYSNTTIKSPNLIFNNLKNGLEIKDKEKIINSENKMFVKIKTRLSEKQIKAHINNQNISLAFDLADIKTPGIYNIAANIILKENINETEIYDYEPKKIKLEIIESSEIKP.

Residues 22 to 38 (AISILIAILMFVAFNFN) form a helical membrane-spanning segment. 2 consecutive YbbR-like domains span residues 43-128 (ITTE…NVLL) and 138-220 (VKIE…VVNI).

It is found in the membrane. This is YbbR-like domain-containing protein BB_0009 from Borreliella burgdorferi (strain ATCC 35210 / DSM 4680 / CIP 102532 / B31) (Borrelia burgdorferi).